Reading from the N-terminus, the 512-residue chain is Serine--tRNA ligase, cytoplasmic (512 aa).

Position 1 is an N-acetylmethionine (Met-1). Positions Arg-9–Ser-61 are interaction with tRNA. At Ser-241 the chain carries Phosphoserine. The L-serine site is built by Thr-271 and Arg-302. Residues Arg-302 to Glu-304 and Val-318 to Phe-321 contribute to the ATP site. At Lys-323 the chain carries N6-acetyllysine. Glu-325 contacts L-serine. Position 391–394 (Glu-391–Ser-394) interacts with ATP. Asn-427 is a binding site for L-serine. Residues Lys-472 to Ala-512 are disordered. A compositionally biased stretch (basic and acidic residues) spans Glu-479–Thr-499. The Nuclear localization signal motif lies at Lys-482–Lys-494. A compositionally biased stretch (polar residues) spans Leu-500–Ala-512.

The protein belongs to the class-II aminoacyl-tRNA synthetase family. Type-1 seryl-tRNA synthetase subfamily. In terms of assembly, homodimer. The tRNA molecule may bind across the dimer. Interacts with SIRT2. Interacts with METTL6; interaction is required for the tRNA N(3)-methylcytidine methyltransferase activity of METTL6.

The protein localises to the cytoplasm. It is found in the nucleus. It carries out the reaction tRNA(Ser) + L-serine + ATP = L-seryl-tRNA(Ser) + AMP + diphosphate + H(+). It catalyses the reaction tRNA(Sec) + L-serine + ATP = L-seryl-tRNA(Sec) + AMP + diphosphate + H(+). Its pathway is aminoacyl-tRNA biosynthesis; selenocysteinyl-tRNA(Sec) biosynthesis; L-seryl-tRNA(Sec) from L-serine and tRNA(Sec): step 1/1. In terms of biological role, catalyzes the attachment of serine to tRNA(Ser) in a two-step reaction: serine is first activated by ATP to form Ser-AMP and then transferred to the acceptor end of tRNA(Ser). Is probably also able to aminoacylate tRNA(Sec) with serine, to form the misacylated tRNA L-seryl-tRNA(Sec), which will be further converted into selenocysteinyl-tRNA(Sec). In the nucleus, binds to the VEGFA core promoter and prevents MYC binding and transcriptional activation by MYC. Recruits SIRT2 to the VEGFA promoter, promoting deacetylation of histone H4 at 'Lys-16' (H4K16). Thereby, inhibits the production of VEGFA and sprouting angiogenesis mediated by VEGFA. In Rattus norvegicus (Rat), this protein is Serine--tRNA ligase, cytoplasmic (Sars1).